The primary structure comprises 933 residues: DNA repair-scaffolding protein (933 aa).

Disordered stretches follow at residues 1–34 (MSGA…LRRG), 67–174 (SEKT…KGTL), and 205–224 (YSSD…IDSE). Basic and acidic residues-rich tracts occupy residues 16 to 29 (WHIE…ERSQ), 71 to 87 (GITE…KTET), and 119 to 132 (RDGR…RLGD). Over residues 138–148 (PEDEDIEDELQ) the composition is skewed to acidic residues. The necessary for interaction with RAD51 stretch occupies residues 175-469 (DISDCDSCAS…GTGWTHGHEK (295 aa)). The segment covering 214-224 (DPEHSLFIDSE) has biased composition (basic and acidic residues).

In terms of assembly, found in a complex, at least composed of BLM, RAD51 and SPIDR; the complex formation is mediated by SPIDR. Interacts (via C-terminal region) with BLM; the interaction is direct. Interacts with RAD51; the interaction is direct. Interacts (via the C-terminal region) with FIGNL1 (via N-terminal one-half region); the interaction is direct.

Its subcellular location is the nucleus. Plays a role in DNA double-strand break (DBS) repair via homologous recombination (HR). Serves as a scaffolding protein that helps to promote the recruitment of DNA-processing enzymes like the helicase BLM and recombinase RAD51 to site of DNA damage, and hence contributes to maintain genomic integrity. This chain is DNA repair-scaffolding protein (Spidr), found in Mus musculus (Mouse).